A 115-amino-acid chain; its full sequence is Small ribosomal subunit protein bS18c (115 aa).

Residues 91 to 115 are disordered; that stretch reads TNALKARTQNKDQKKEKFQINKKKK. A compositionally biased stretch (basic and acidic residues) spans 99–109; that stretch reads QNKDQKKEKFQ.

The protein belongs to the bacterial ribosomal protein bS18 family. Part of the 30S ribosomal subunit.

Its subcellular location is the plastid. The protein resides in the chloroplast. In Ipomoea purpurea (Common morning glory), this protein is Small ribosomal subunit protein bS18c.